An 809-amino-acid polypeptide reads, in one-letter code: Leucine--tRNA ligase (809 aa).

A 'HIGH' region motif is present at residues 40-50 (PYPSGRIHMGH). Residues 579-583 (KMSKS) carry the 'KMSKS' region motif. Position 582 (Lys-582) interacts with ATP.

Belongs to the class-I aminoacyl-tRNA synthetase family.

The protein resides in the cytoplasm. It carries out the reaction tRNA(Leu) + L-leucine + ATP = L-leucyl-tRNA(Leu) + AMP + diphosphate. This chain is Leucine--tRNA ligase, found in Campylobacter lari (strain RM2100 / D67 / ATCC BAA-1060).